A 261-amino-acid polypeptide reads, in one-letter code: Pyridoxine-5'-phosphate oxidase (261 aa).

42-45 lines the pyridoxal 5'-phosphate pocket; the sequence is RGDR. FMN is bound at residue 95–98; the sequence is RMLL. Residue Lys-100 coordinates pyridoxal 5'-phosphate. FMN-binding positions include 110-111, 116-117, and Gln-139; these read FT and RK. Residues Tyr-157, Arg-161, and Ser-165 each coordinate pyridoxal 5'-phosphate. Residues 174–175 and Trp-219 each bind FMN; that span reads QS. 225-227 serves as a coordination point for pyridoxal 5'-phosphate; the sequence is RLH. Residue Arg-229 participates in FMN binding. Phosphothreonine is present on Thr-238. Ser-241 bears the Phosphoserine mark.

The protein belongs to the pyridoxamine 5'-phosphate oxidase family. In terms of assembly, homodimer. FMN is required as a cofactor. In terms of tissue distribution, detected in adult liver.

It catalyses the reaction pyridoxamine 5'-phosphate + O2 + H2O = pyridoxal 5'-phosphate + H2O2 + NH4(+). The enzyme catalyses pyridoxine 5'-phosphate + O2 = pyridoxal 5'-phosphate + H2O2. Its pathway is cofactor metabolism; pyridoxal 5'-phosphate salvage; pyridoxal 5'-phosphate from pyridoxamine 5'-phosphate: step 1/1. It participates in cofactor metabolism; pyridoxal 5'-phosphate salvage; pyridoxal 5'-phosphate from pyridoxine 5'-phosphate: step 1/1. Catalyzes the oxidation of either pyridoxine 5'-phosphate (PNP) or pyridoxamine 5'-phosphate (PMP) into pyridoxal 5'-phosphate (PLP). This chain is Pyridoxine-5'-phosphate oxidase (Pnpo), found in Rattus norvegicus (Rat).